The following is a 393-amino-acid chain: Arginine biosynthesis bifunctional protein ArgJ (393 aa).

Threonine 143, lysine 168, threonine 179, glutamate 265, asparagine 388, and threonine 393 together coordinate substrate. The active-site Nucleophile is the threonine 179.

The protein belongs to the ArgJ family. As to quaternary structure, heterotetramer of two alpha and two beta chains.

The protein localises to the cytoplasm. The enzyme catalyses N(2)-acetyl-L-ornithine + L-glutamate = N-acetyl-L-glutamate + L-ornithine. It catalyses the reaction L-glutamate + acetyl-CoA = N-acetyl-L-glutamate + CoA + H(+). It participates in amino-acid biosynthesis; L-arginine biosynthesis; L-ornithine and N-acetyl-L-glutamate from L-glutamate and N(2)-acetyl-L-ornithine (cyclic): step 1/1. It functions in the pathway amino-acid biosynthesis; L-arginine biosynthesis; N(2)-acetyl-L-ornithine from L-glutamate: step 1/4. Catalyzes two activities which are involved in the cyclic version of arginine biosynthesis: the synthesis of N-acetylglutamate from glutamate and acetyl-CoA as the acetyl donor, and of ornithine by transacetylation between N(2)-acetylornithine and glutamate. The chain is Arginine biosynthesis bifunctional protein ArgJ from Syntrophotalea carbinolica (strain DSM 2380 / NBRC 103641 / GraBd1) (Pelobacter carbinolicus).